Reading from the N-terminus, the 451-residue chain is Coproporphyrinogen III oxidase (451 aa).

Residues 10 to 15, 36 to 37, 58 to 61, Val-242, Trp-393, and 429 to 431 contribute to the FAD site; these read GGGISG, DP, GAEA, and IGV.

This sequence belongs to the protoporphyrinogen/coproporphyrinogen oxidase family. Coproporphyrinogen III oxidase subfamily. FAD is required as a cofactor.

It localises to the cytoplasm. It catalyses the reaction coproporphyrinogen III + 3 O2 = coproporphyrin III + 3 H2O2. Its pathway is porphyrin-containing compound metabolism; protoheme biosynthesis. Involved in coproporphyrin-dependent heme b biosynthesis. Catalyzes the oxidation of coproporphyrinogen III to coproporphyrin III. The chain is Coproporphyrinogen III oxidase from Mycobacterium leprae (strain TN).